The following is a 634-amino-acid chain: Bacteriophytochrome (634 aa).

Cysteine 13 is a binding site for biliverdin IXalpha. One can recognise a PAS 1 domain in the interval 13–118 (CAREPIHIPG…YPQQWLVEME (106 aa)). The photosensory core domain stretch occupies residues 13–514 (CAREPIHIPG…ELMERKRFQQ (502 aa)). The GAF domain occupies 151-305 (RVAKGLRSLI…VTDAVARTLA (155 aa)). Residues 325–508 (TVREKLITDF…SLRVLIELME (184 aa)) form a phytochrome-specific (PHY) region. Residues 452 to 480 (WAGNPQLAKLEDIPNSRLSPRKSFDLWQQ) form a tongue domain region. The PAS 2 domain occupies 515–590 (DFTLLEASLS…ELLQDALRNG (76 aa)). The interval 515 to 634 (DFTLLEASLS…HWLLQLRDPE (120 aa)) is PAS9, output module, not required to bind biliverdin IX-alpha, required for dimerization.

In the N-terminal section; belongs to the phytochrome family. In terms of assembly, forms head-to-head homodimers. In terms of processing, contains one covalently linked biliverdin IX-alpha chromophore; present in the crystal structure as a mixture of Pr and Meta-R configurations.

Photoreceptor which exists in two forms that are reversibly interconvertible by light: far-red light (733 nm) converts protein to the red-absorbing (Pr) form, while red light (630 nm) partly converts the protein to the far-red-absorbing (Pfr) form. Regulates virulence of X.campestris pv. campestris on its host plants, perhaps by fine-tuning expression to ambient light levels and/or spatial cues. The Pr form may sense light and partially inhibit virulence; in the dark (Pfr form) biofilm and xanathan production rise and bacteria are more virulent. Strains overexpressing this protein have significantly decreased amounts of extracellular beta-1,4-endoglucanase, produce less xanthin and have decreased transcription of genes involved in virulence such as endoglucanases, type 2 secretion systems, xanthan production and flagellar-dependent motility. This Xanthomonas campestris pv. campestris (strain 8004) protein is Bacteriophytochrome (bphP).